The chain runs to 278 residues: 4-deoxy-L-threo-5-hexosulose-uronate ketol-isomerase (278 aa).

Residues histidine 196, histidine 198, glutamate 203, and histidine 245 each contribute to the Zn(2+) site.

This sequence belongs to the KduI family. The cofactor is Zn(2+).

It carries out the reaction 5-dehydro-4-deoxy-D-glucuronate = 3-deoxy-D-glycero-2,5-hexodiulosonate. The protein operates within glycan metabolism; pectin degradation; 2-dehydro-3-deoxy-D-gluconate from pectin: step 4/5. Its function is as follows. Catalyzes the isomerization of 5-dehydro-4-deoxy-D-glucuronate to 3-deoxy-D-glycero-2,5-hexodiulosonate. The polypeptide is 4-deoxy-L-threo-5-hexosulose-uronate ketol-isomerase (Salmonella dublin (strain CT_02021853)).